We begin with the raw amino-acid sequence, 251 residues long: uncharacterized protein (251 aa).

The tract at residues 229–251 is disordered; it reads TSTETSPEHQADLKDDNSDISST. Basic and acidic residues predominate over residues 234-245; the sequence is SPEHQADLKDDN.

This is an uncharacterized protein from Acanthamoeba polyphaga (Amoeba).